The following is a 393-amino-acid chain: MDSQGRKVIVVDNGTGFVKCGYAGTNFPAHIFPSMVGRPIVRSTQRVGNIEIKDLMVGEECSQLRQMLDINYPMDNGIVRNWDDMGHVWDHTFGPEKLDIDPKECKLLLTEPPLNPNSNREKMFQVMFEQYGFNSIYVAAVLTLYAQGLLTGVVVDSGDGVTHICPVYEGFALHHLTRRLDIAGRDITKYLIKLLLQRGYNFNHSADFETVRQMKEKLCYIAYDVEQEERLALETTVLSQQYTLPDGRVIRLGGERFEAPEILFQPHLINVEKAGLSELLFGCIQASDIDTRLDFYKHIVLSGGTTMYPGLPSRLEKELKQLYLDRVLHGNTDAFQKFKIRIEAPPSRKHMVFLGGAVLANLMKDRDQDFWVSKKEYEEGGIARCMAKLGIKA.

ATP-binding positions include 158 to 160, 212 to 216, and 303 to 308; these read GDG, RQMKE, and GGTTMY.

It belongs to the actin family. ARP2 subfamily. As to quaternary structure, component of the Arp2/3 complex.

Its subcellular location is the cytoplasm. The protein resides in the cytoskeleton. Functions as ATP-binding component of the Arp2/3 complex which is involved in regulation of actin polymerization and together with an activating nucleation-promoting factor (NPF) mediates the formation of branched actin networks. Seems to contact the pointed end of the daughter actin filament. The protein is Actin-related protein 2 (arx-2) of Caenorhabditis briggsae.